The primary structure comprises 247 residues: NADH-ubiquinone oxidoreductase chain 6 (247 aa).

5 helical membrane passes run 18–38, 44–64, 70–90, 104–124, and 168–188; these read TMIL…VVRA, SVLF…LLGL, ISPV…VMMF, YLPV…FILD, and VWFL…IVLT.

The protein belongs to the complex I subunit 6 family.

It is found in the mitochondrion membrane. The enzyme catalyses a ubiquinone + NADH + 5 H(+)(in) = a ubiquinol + NAD(+) + 4 H(+)(out). Core subunit of the mitochondrial membrane respiratory chain NADH dehydrogenase (Complex I) that is believed to belong to the minimal assembly required for catalysis. Complex I functions in the transfer of electrons from NADH to the respiratory chain. The immediate electron acceptor for the enzyme is believed to be ubiquinone. The chain is NADH-ubiquinone oxidoreductase chain 6 (ND6) from Triticum aestivum (Wheat).